Consider the following 379-residue polypeptide: Na(+)/H(+) antiporter NhaA (379 aa).

12 helical membrane-spanning segments follow: residues 14–34, 59–79, 95–115, 125–145, 154–174, 175–195, 200–220, 221–241, 261–281, 292–312, 328–348, and 359–379; these read AGGILLFIFATLAIILANTPL, LLMWVNDGLMAVFFMLVGMEV, VFPAIAATGGMVVPAIVFLVF, GWAIPMATDIAFALGVIALLG, IFLLALAIIDDLGAIVVIALF, FSHDLSPQAFIFAGIAVAILI, LKITALSAYGIVGIILWASVL, KSGVHATLAGVIIGFCIPLNG, FAILPLFAFCNAGVSLIGMGM, IALGLLLGKPLGIFSFCFVAV, IFAVSVLCGIGFTMSMFLAGL, and VTALARLGILIGSGFSAVLGY.

Belongs to the NhaA Na(+)/H(+) (TC 2.A.33) antiporter family.

It localises to the cell inner membrane. It carries out the reaction Na(+)(in) + 2 H(+)(out) = Na(+)(out) + 2 H(+)(in). In terms of biological role, na(+)/H(+) antiporter that extrudes sodium in exchange for external protons. The sequence is that of Na(+)/H(+) antiporter NhaA from Pasteurella multocida (strain Pm70).